A 510-amino-acid chain; its full sequence is Flavonoid 3',5'-hydroxylase (510 aa).

C447 contacts heme.

It belongs to the cytochrome P450 family. The cofactor is heme.

It catalyses the reaction a 3',5'-unsubstituted flavanone + 2 reduced [NADPH--hemoprotein reductase] + 2 O2 = a 3',5'-dihydroxyflavanone + 2 oxidized [NADPH--hemoprotein reductase] + 2 H2O + 2 H(+). It functions in the pathway pigment biosynthesis; anthocyanin biosynthesis. Catalyzes the 3'5'-hydroxylation of naringenin and eriodictyol to form 5,7,3,'4',5'-pentahydroxyflavanone and 3',5'-hydroxylation of dihydrokaempferol and dihydroquercetin to form dihydromyricetin. This chain is Flavonoid 3',5'-hydroxylase (CYP75A7), found in Eustoma exaltatum subsp. russellianum (Bluebells).